A 255-amino-acid polypeptide reads, in one-letter code: 4-hydroxy-tetrahydrodipicolinate reductase (255 aa).

NAD(+)-binding positions include 9-14 (GFKGKM), 89-91 (GTT), and 115-118 (APNF). Histidine 145 serves as the catalytic Proton donor/acceptor. Histidine 146 is a (S)-2,3,4,5-tetrahydrodipicolinate binding site. Lysine 149 (proton donor) is an active-site residue. Position 155-156 (155-156 (GT)) interacts with (S)-2,3,4,5-tetrahydrodipicolinate.

The protein belongs to the DapB family.

Its subcellular location is the cytoplasm. The catalysed reaction is (S)-2,3,4,5-tetrahydrodipicolinate + NAD(+) + H2O = (2S,4S)-4-hydroxy-2,3,4,5-tetrahydrodipicolinate + NADH + H(+). It carries out the reaction (S)-2,3,4,5-tetrahydrodipicolinate + NADP(+) + H2O = (2S,4S)-4-hydroxy-2,3,4,5-tetrahydrodipicolinate + NADPH + H(+). It participates in amino-acid biosynthesis; L-lysine biosynthesis via DAP pathway; (S)-tetrahydrodipicolinate from L-aspartate: step 4/4. In terms of biological role, catalyzes the conversion of 4-hydroxy-tetrahydrodipicolinate (HTPA) to tetrahydrodipicolinate. This chain is 4-hydroxy-tetrahydrodipicolinate reductase, found in Streptococcus suis (strain 98HAH33).